The sequence spans 480 residues: Glutamate--tRNA ligase (480 aa).

A 'HIGH' region motif is present at residues 12-22; it reads PSPTGAPHLGL. Residues 255 to 259 carry the 'KMSKS' region motif; sequence KLSKR. Lys258 contributes to the ATP binding site.

This sequence belongs to the class-I aminoacyl-tRNA synthetase family. Glutamate--tRNA ligase type 1 subfamily. As to quaternary structure, monomer.

It localises to the cytoplasm. It carries out the reaction tRNA(Glu) + L-glutamate + ATP = L-glutamyl-tRNA(Glu) + AMP + diphosphate. Catalyzes the attachment of glutamate to tRNA(Glu) in a two-step reaction: glutamate is first activated by ATP to form Glu-AMP and then transferred to the acceptor end of tRNA(Glu). This chain is Glutamate--tRNA ligase, found in Tropheryma whipplei (strain TW08/27) (Whipple's bacillus).